We begin with the raw amino-acid sequence, 371 residues long: Protein MxiG (371 aa).

A helical transmembrane segment spans residues Val-127–Phe-141.

It localises to the cell inner membrane. The protein localises to the cell outer membrane. In terms of biological role, involved in the secretion of the Ipa antigens. Involved in the intracellular dissemination of Shigella. Part of the Mxi-Spa secretion apparatus. This chain is Protein MxiG (mxiG), found in Shigella flexneri.